The primary structure comprises 137 residues: Large ribosomal subunit protein uL16c (137 aa).

This sequence belongs to the universal ribosomal protein uL16 family. In terms of assembly, part of the 50S ribosomal subunit.

It is found in the plastid. In Aneura mirabilis (Parasitic liverwort), this protein is Large ribosomal subunit protein uL16c.